We begin with the raw amino-acid sequence, 448 residues long: MNMLAPTAKNAFTPASLDRPAYQSGFGNEFSTEALPGALPHGQNSPQKAPYGLYAEQISGTAFTAPRAHNRRSWLYRIRPGAVHLPFEAMAQGRFHSHFNEVPPSPNQLRWDPLPAPAAGTDFIDGIVTFAGNGGPDAQTGCGIHLYAANADMTDRFFYNADGELLIVPQQGRLRLLTEMGVVDVEPLEIAVIPRGVRFRVELPDGDARGYICENFGALFRLPDLGVIGSNGLANPRDFLTPHAWYEDREGAFELVAKFQGSLWTAKIGHSPLDVVAWHGNLAPYKYDLRLFNTIGSISYDHPDPSIFLVLQSPSATPGVDTIDFVIFPPRWLAAENTFRPPWFHRNVASEFMGLIQGVYDAKAEGFVPGGASLHNCMSGHGPDADTFEKASNSDTTKPHKVDATMAFMFETPAVIRPTRFAAESAQLQAKYFECWQGLKKHFDPSKR.

The Proton acceptor role is filled by His302. Positions 345 and 351 each coordinate Fe cation. Positions 360 and 381 each coordinate homogentisate. A Fe cation-binding site is contributed by His381.

This sequence belongs to the homogentisate dioxygenase family. Hexamer; dimer of trimers. The cofactor is Fe cation.

It catalyses the reaction homogentisate + O2 = 4-maleylacetoacetate + H(+). It participates in amino-acid degradation; L-phenylalanine degradation; acetoacetate and fumarate from L-phenylalanine: step 4/6. Involved in the catabolism of homogentisate (2,5-dihydroxyphenylacetate or 2,5-OH-PhAc), a central intermediate in the degradation of phenylalanine and tyrosine. Catalyzes the oxidative ring cleavage of the aromatic ring of homogentisate to yield maleylacetoacetate. The protein is Homogentisate 1,2-dioxygenase of Ralstonia pickettii (strain 12J).